Here is a 219-residue protein sequence, read N- to C-terminus: Thiamine-phosphate synthase (219 aa).

4-amino-2-methyl-5-(diphosphooxymethyl)pyrimidine is bound by residues Gln44 to Lys48 and Asn79. Positions 80 and 99 each coordinate Mg(2+). A 4-amino-2-methyl-5-(diphosphooxymethyl)pyrimidine-binding site is contributed by Ser117. Thr143–Thr145 provides a ligand contact to 2-[(2R,5Z)-2-carboxy-4-methylthiazol-5(2H)-ylidene]ethyl phosphate. Position 146 (Lys146) interacts with 4-amino-2-methyl-5-(diphosphooxymethyl)pyrimidine. 2-[(2R,5Z)-2-carboxy-4-methylthiazol-5(2H)-ylidene]ethyl phosphate-binding positions include Gly175 and Ile195–Ser196.

This sequence belongs to the thiamine-phosphate synthase family. The cofactor is Mg(2+).

The catalysed reaction is 2-[(2R,5Z)-2-carboxy-4-methylthiazol-5(2H)-ylidene]ethyl phosphate + 4-amino-2-methyl-5-(diphosphooxymethyl)pyrimidine + 2 H(+) = thiamine phosphate + CO2 + diphosphate. It carries out the reaction 2-(2-carboxy-4-methylthiazol-5-yl)ethyl phosphate + 4-amino-2-methyl-5-(diphosphooxymethyl)pyrimidine + 2 H(+) = thiamine phosphate + CO2 + diphosphate. The enzyme catalyses 4-methyl-5-(2-phosphooxyethyl)-thiazole + 4-amino-2-methyl-5-(diphosphooxymethyl)pyrimidine + H(+) = thiamine phosphate + diphosphate. It functions in the pathway cofactor biosynthesis; thiamine diphosphate biosynthesis; thiamine phosphate from 4-amino-2-methyl-5-diphosphomethylpyrimidine and 4-methyl-5-(2-phosphoethyl)-thiazole: step 1/1. In terms of biological role, condenses 4-methyl-5-(beta-hydroxyethyl)thiazole monophosphate (THZ-P) and 2-methyl-4-amino-5-hydroxymethyl pyrimidine pyrophosphate (HMP-PP) to form thiamine monophosphate (TMP). This Bacillus thuringiensis (strain Al Hakam) protein is Thiamine-phosphate synthase.